We begin with the raw amino-acid sequence, 275 residues long: Formamidopyrimidine-DNA glycosylase (275 aa).

Pro-2 functions as the Schiff-base intermediate with DNA in the catalytic mechanism. The active-site Proton donor is Glu-3. Lys-58 functions as the Proton donor; for beta-elimination activity in the catalytic mechanism. The DNA site is built by His-91, Arg-109, and Arg-154. The segment at Ala-240–Lys-274 adopts an FPG-type zinc-finger fold. Arg-264 functions as the Proton donor; for delta-elimination activity in the catalytic mechanism.

The protein belongs to the FPG family. Monomer. It depends on Zn(2+) as a cofactor.

The enzyme catalyses Hydrolysis of DNA containing ring-opened 7-methylguanine residues, releasing 2,6-diamino-4-hydroxy-5-(N-methyl)formamidopyrimidine.. It carries out the reaction 2'-deoxyribonucleotide-(2'-deoxyribose 5'-phosphate)-2'-deoxyribonucleotide-DNA = a 3'-end 2'-deoxyribonucleotide-(2,3-dehydro-2,3-deoxyribose 5'-phosphate)-DNA + a 5'-end 5'-phospho-2'-deoxyribonucleoside-DNA + H(+). In terms of biological role, involved in base excision repair of DNA damaged by oxidation or by mutagenic agents. Acts as a DNA glycosylase that recognizes and removes damaged bases. Has a preference for oxidized purines, such as 7,8-dihydro-8-oxoguanine (8-oxoG). Has AP (apurinic/apyrimidinic) lyase activity and introduces nicks in the DNA strand. Cleaves the DNA backbone by beta-delta elimination to generate a single-strand break at the site of the removed base with both 3'- and 5'-phosphates. This Bordetella pertussis (strain Tohama I / ATCC BAA-589 / NCTC 13251) protein is Formamidopyrimidine-DNA glycosylase.